We begin with the raw amino-acid sequence, 315 residues long: Prephenate dehydratase (315 aa).

Residues 3–189 (RIAYLGPEGT…ARTRFLLIGV (187 aa)) form the Prephenate dehydratase domain. Residues 203–280 (SVVLRIANVP…ADVRYLGSWP (78 aa)) enclose the ACT domain.

In terms of assembly, homodimer.

The enzyme catalyses prephenate + H(+) = 3-phenylpyruvate + CO2 + H2O. Its pathway is amino-acid biosynthesis; L-phenylalanine biosynthesis; phenylpyruvate from prephenate: step 1/1. The protein is Prephenate dehydratase (pheA) of Mycobacterium marinum (strain ATCC BAA-535 / M).